The chain runs to 1417 residues: DNA-directed RNA polymerase subunit beta' (1417 aa).

Residues C68, C70, C83, and C86 each contribute to the Zn(2+) site. Mg(2+) is bound by residues D458, D460, and D462. Zn(2+)-binding residues include C811, C884, C891, and C894.

This sequence belongs to the RNA polymerase beta' chain family. As to quaternary structure, the RNAP catalytic core consists of 2 alpha, 1 beta, 1 beta' and 1 omega subunit. When a sigma factor is associated with the core the holoenzyme is formed, which can initiate transcription. Mg(2+) serves as cofactor. Requires Zn(2+) as cofactor.

The catalysed reaction is RNA(n) + a ribonucleoside 5'-triphosphate = RNA(n+1) + diphosphate. In terms of biological role, DNA-dependent RNA polymerase catalyzes the transcription of DNA into RNA using the four ribonucleoside triphosphates as substrates. This is DNA-directed RNA polymerase subunit beta' from Francisella tularensis subsp. mediasiatica (strain FSC147).